A 188-amino-acid polypeptide reads, in one-letter code: MFILGSGSPRRKELLAQIGVVPDDIRPPDINETPLKGELPRPYCARMAREKACAVDALPDDVVLCADTTVALGRRILGKPEDATEAAAFLKLLSGRRHRVITAIAVRVAERVWEKDVVSIVRMKSLSQAEIQSYIDSEDWRGKAGGYGIQGPAAALIPWISGSYTGIVGLPLAETAGLLQAAGYRGAS.

The active-site Proton acceptor is aspartate 67.

It belongs to the Maf family. YhdE subfamily. A divalent metal cation serves as cofactor.

The protein localises to the cytoplasm. It carries out the reaction dTTP + H2O = dTMP + diphosphate + H(+). The catalysed reaction is UTP + H2O = UMP + diphosphate + H(+). In terms of biological role, nucleoside triphosphate pyrophosphatase that hydrolyzes dTTP and UTP. May have a dual role in cell division arrest and in preventing the incorporation of modified nucleotides into cellular nucleic acids. This is dTTP/UTP pyrophosphatase from Roseobacter denitrificans (strain ATCC 33942 / OCh 114) (Erythrobacter sp. (strain OCh 114)).